The following is a 767-amino-acid chain: Cap-specific mRNA (nucleoside-2'-O-)-methyltransferase 2 (767 aa).

The Adrift-type SAM-dependent 2'-O-MTase domain occupies 109–322 (ELCTQAWCKF…VYVVCLRYKG (214 aa)). The active site involves Lys117. Gly148, Trp167, and Asp235 together coordinate S-adenosyl-L-methionine. Asp235 is an active-site residue. Lys275 acts as the Proton acceptor in catalysis.

The protein resides in the nucleus. The protein localises to the cytoplasm. The enzyme catalyses a 5'-end (N(7)-methyl 5'-triphosphoguanosine)-(2'-O-methyl-ribonucleoside)-(ribonucleotide) in mRNA + S-adenosyl-L-methionine = a 5'-end (N(7)-methyl 5'-triphosphoguanosine)-(2'-O-methyl-ribonucleoside)-(2'-O-methyl-ribonucleotide) in mRNA + S-adenosyl-L-homocysteine + H(+). Its function is as follows. S-adenosyl-L-methionine-dependent methyltransferase that mediates mRNA cap2 2'-O-ribose methylation to the 5'-cap structure of mRNAs. Methylates the ribose of the second nucleotide of a m(7)GpppG-capped mRNA and small nuclear RNA (snRNA) (cap0) to produce m(7)GpppRmpNm (cap2). Recognizes a guanosine cap on RNA independently of its N(7) methylation status. Display cap2 methylation on both cap0 and cap1. Displays a preference for cap1 RNAs. The sequence is that of Cap-specific mRNA (nucleoside-2'-O-)-methyltransferase 2 (Cmtr2) from Mus musculus (Mouse).